Reading from the N-terminus, the 200-residue chain is Interferon lambda-2 (200 aa).

Positions 1 to 25 (MKLDMTGDCTPVLVLMAAVLTVTGA) are cleaved as a signal peptide.

The protein belongs to the lambda interferon family.

It is found in the secreted. Functionally, cytokine with antiviral, antitumour and immunomodulatory activities. Plays a critical role in the antiviral host defense, predominantly in the epithelial tissues. Acts as a ligand for the heterodimeric class II cytokine receptor composed of IL10RB and IFNLR1, and receptor engagement leads to the activation of the JAK/STAT signaling pathway resulting in the expression of IFN-stimulated genes (ISG), which mediate the antiviral state. Has a restricted receptor distribution and therefore restricted targets: is primarily active in epithelial cells and this cell type-selective action is because of the epithelial cell-specific expression of its receptor IFNLR1. Seems not to be essential for early virus-activated host defense in vaginal infection, but plays an important role in Toll-like receptor (TLR)-induced antiviral defense. Plays a significant role in the antiviral immune defense in the intestinal epithelium. Exerts an immunomodulatory effect by up-regulating MHC class I antigen expression. The sequence is that of Interferon lambda-2 (IFNL2) from Homo sapiens (Human).